The chain runs to 300 residues: Ribonuclease HIII (300 aa).

One can recognise an RNase H type-2 domain in the interval 86–300 (RSRIGVDESG…FNEVLGSGNQ (215 aa)). Positions 92, 93, and 196 each coordinate a divalent metal cation.

The protein belongs to the RNase HII family. RnhC subfamily. Mn(2+) is required as a cofactor. Mg(2+) serves as cofactor.

It is found in the cytoplasm. The catalysed reaction is Endonucleolytic cleavage to 5'-phosphomonoester.. Endonuclease that specifically degrades the RNA of RNA-DNA hybrids. This Chlamydia trachomatis serovar A (strain ATCC VR-571B / DSM 19440 / HAR-13) protein is Ribonuclease HIII.